Here is a 153-residue protein sequence, read N- to C-terminus: Small ribosomal subunit protein uS5 (153 aa).

Residues 15 to 78 (FQEVVVNIGR…DDAFKNLIHV (64 aa)) enclose the S5 DRBM domain.

The protein belongs to the universal ribosomal protein uS5 family. As to quaternary structure, part of the 30S ribosomal subunit. Contacts proteins S4 and S8.

Its function is as follows. With S4 and S12 plays an important role in translational accuracy. In terms of biological role, located at the back of the 30S subunit body where it stabilizes the conformation of the head with respect to the body. The protein is Small ribosomal subunit protein uS5 of Helicobacter pylori (strain P12).